Reading from the N-terminus, the 173-residue chain is 16S rRNA aminocarboxypropyltransferase (173 aa).

S-adenosyl-L-methionine contacts are provided by Thr25, Leu72, Leu96, and Ser115.

This sequence belongs to the TDD superfamily. TSR3 family.

The protein resides in the cytoplasm. It catalyses the reaction an N(1)-methylpseudouridine in rRNA + S-adenosyl-L-methionine = N(1)-methyl-N(3)-[(3S)-3-amino-3-carboxypropyl]pseudouridine in rRNA + S-methyl-5'-thioadenosine + H(+). Its function is as follows. Aminocarboxypropyltransferase that catalyzes the aminocarboxypropyl transfer on pseudouridine corresponding to position 914 in M.jannaschii 16S rRNA. It constitutes the last step in biosynthesis of the hypermodified N1-methyl-N3-(3-amino-3-carboxypropyl) pseudouridine (m1acp3-Psi). This chain is 16S rRNA aminocarboxypropyltransferase, found in Methanosarcina mazei (strain ATCC BAA-159 / DSM 3647 / Goe1 / Go1 / JCM 11833 / OCM 88) (Methanosarcina frisia).